Consider the following 405-residue polypeptide: Imidazolonepropionase (405 aa).

The Fe(3+) site is built by His-70 and His-72. Zn(2+)-binding residues include His-70 and His-72. 4-imidazolone-5-propanoate-binding residues include Arg-79, Tyr-142, and His-175. Tyr-142 lines the N-formimidoyl-L-glutamate pocket. His-240 provides a ligand contact to Fe(3+). A Zn(2+)-binding site is contributed by His-240. Residue Gln-243 coordinates 4-imidazolone-5-propanoate. Fe(3+) is bound at residue Asp-315. Asp-315 is a binding site for Zn(2+). N-formimidoyl-L-glutamate contacts are provided by Asn-317 and Gly-319. Thr-320 contacts 4-imidazolone-5-propanoate.

This sequence belongs to the metallo-dependent hydrolases superfamily. HutI family. Zn(2+) is required as a cofactor. The cofactor is Fe(3+).

Its subcellular location is the cytoplasm. It carries out the reaction 4-imidazolone-5-propanoate + H2O = N-formimidoyl-L-glutamate. It participates in amino-acid degradation; L-histidine degradation into L-glutamate; N-formimidoyl-L-glutamate from L-histidine: step 3/3. Its function is as follows. Catalyzes the hydrolytic cleavage of the carbon-nitrogen bond in imidazolone-5-propanoate to yield N-formimidoyl-L-glutamate. It is the third step in the universal histidine degradation pathway. The polypeptide is Imidazolonepropionase (Ectopseudomonas mendocina (strain ymp) (Pseudomonas mendocina)).